A 117-amino-acid chain; its full sequence is MLEGGVVSRKRRKRILKLAKGYYGAKHLLFRTAKEQVMNSYYYAYRDRRQKKRDFRKLWITRINAAARMNGLSYSQLMHGLKLAEIEVNRKMLADLAVNDAAAFTALADAAKAKLAK.

This sequence belongs to the bacterial ribosomal protein bL20 family.

Binds directly to 23S ribosomal RNA and is necessary for the in vitro assembly process of the 50S ribosomal subunit. It is not involved in the protein synthesizing functions of that subunit. In Streptococcus suis (strain 05ZYH33), this protein is Large ribosomal subunit protein bL20.